Here is a 427-residue protein sequence, read N- to C-terminus: Inward rectifier potassium channel 2 (427 aa).

Residues methionine 1–tryptophan 81 lie on the Cytoplasmic side of the membrane. S-nitrosocysteine is present on cysteine 76. Residues arginine 82–isoleucine 106 traverse the membrane as a helical segment. Residues alanine 107–serine 128 are Extracellular-facing. The helical; Pore-forming intramembrane region spans phenylalanine 129–glutamine 140. The segment at residues threonine 141–phenylalanine 147 is an intramembrane region (pore-forming). A Selectivity filter motif is present at residues threonine 142 to phenylalanine 147. Residues arginine 148–isoleucine 156 lie on the Extracellular side of the membrane. Residues alanine 157–alanine 178 form a helical membrane-spanning segment. The Cytoplasmic segment spans residues valine 179 to isoleucine 427. Positions alanine 181–leucine 208 are polyphosphoinositide (PIP2)-binding. Positions threonine 383–isoleucine 427 are disordered. Positions serine 425–isoleucine 427 match the PDZ-binding motif.

This sequence belongs to the inward rectifier-type potassium channel (TC 1.A.2.1) family. KCNJ2 subfamily. In terms of assembly, homotetramer. Homomultimeric and heteromultimeric association with KCNJ4/Kir2.3. Can form heteromeric channels with Kir2.6/KCNJ18. Associates, via its PDZ-recognition domain, with a complex containing LIN7A, LIN7B, LIN7C, DLG1, CASK and APBA1. In terms of processing, S-nitrosylation increases the open probability and inward rectifying currents. In terms of tissue distribution, prominently expressed in the central nervous system. Also found in other excitable tissues such as heart and skeletal muscle.

It is found in the cell membrane. The protein resides in the sarcolemma. The protein localises to the T-tubule. It catalyses the reaction K(+)(in) = K(+)(out). Its activity is regulated as follows. Activated by phosphatidylinositol 4,5 biphosphate (PtdIns(4,5)P2). In terms of biological role, inward rectifier potassium channels are characterized by a greater tendency to allow potassium to flow into the cell rather than out of it. Their voltage dependence is regulated by the concentration of extracellular potassium; as external potassium is raised, the voltage range of the channel opening shifts to more positive voltages. The inward rectification is mainly due to the blockage of outward current by internal magnesium. Can be blocked by extracellular barium and cesium. Probably participates in establishing action potential waveform and excitability of neuronal and muscle tissues. The protein is Inward rectifier potassium channel 2 (Kcnj2) of Rattus norvegicus (Rat).